Reading from the N-terminus, the 250-residue chain is LexA repressor (250 aa).

Positions 1-21 are enriched in basic and acidic residues; the sequence is MTSQERGTRRGDTRGNVRDFP. The segment at 1–33 is disordered; it reads MTSQERGTRRGDTRGNVRDFPDSPADASGLTQR. A DNA-binding region (H-T-H motif) is located at residues 54 to 74; that stretch reads VREIGEAVGLTSTSSVAHQLK. Residues Ser174 and Lys211 each act as for autocatalytic cleavage activity in the active site.

Belongs to the peptidase S24 family. As to quaternary structure, homodimer.

The catalysed reaction is Hydrolysis of Ala-|-Gly bond in repressor LexA.. In terms of biological role, represses a number of genes involved in the response to DNA damage (SOS response), including recA and lexA. In the presence of single-stranded DNA, RecA interacts with LexA causing an autocatalytic cleavage which disrupts the DNA-binding part of LexA, leading to derepression of the SOS regulon and eventually DNA repair. In Parafrankia sp. (strain EAN1pec), this protein is LexA repressor.